An 86-amino-acid chain; its full sequence is Small ribosomal subunit protein uS17 (86 aa).

This sequence belongs to the universal ribosomal protein uS17 family. As to quaternary structure, part of the 30S ribosomal subunit.

Its function is as follows. One of the primary rRNA binding proteins, it binds specifically to the 5'-end of 16S ribosomal RNA. This Streptococcus pyogenes serotype M6 (strain ATCC BAA-946 / MGAS10394) protein is Small ribosomal subunit protein uS17.